A 330-amino-acid chain; its full sequence is Glucosyltransferase 3 (330 aa).

Thr16 serves as a coordination point for UDP. The substrate protein-binding loop stretch occupies residues 106 to 111; sequence MFSGNF. UDP is bound by residues Arg179, 211–214, and 244–249; these read YRPD and SYKLGS.

This sequence belongs to the Gtf3 glucosyltransferase family. Homotetramer; a dimer of dimers. It depends on In vitro glycosyltransferase activity is metal-independent. as a cofactor.

It participates in protein modification; protein glycosylation. In terms of biological role, required for polymorphic O-glycosylation of the serine-rich repeat protein Fap1. Catalyzes the second step in glycosylation of the serine-rich repeat protein in this bacteria. Transfers glucose from UDP-glucose to the terminal GlcNAc moiety of 3-O-(N-acetyl-alpha-D-glucosaminyl)-L-seryl-[protein] which results from the first glycosylation step of Fap1; does not use other sugar nucleotides as substrates. The chain is Glucosyltransferase 3 from Streptococcus parasanguinis.